Consider the following 383-residue polypeptide: Arginine biosynthesis bifunctional protein ArgJ (383 aa).

Residues Thr146, Lys168, Thr179, Glu259, Asn378, and Ser383 each contribute to the substrate site. Thr179 acts as the Nucleophile in catalysis.

This sequence belongs to the ArgJ family. In terms of assembly, heterotetramer of two alpha and two beta chains.

Its subcellular location is the cytoplasm. It carries out the reaction N(2)-acetyl-L-ornithine + L-glutamate = N-acetyl-L-glutamate + L-ornithine. The enzyme catalyses L-glutamate + acetyl-CoA = N-acetyl-L-glutamate + CoA + H(+). It participates in amino-acid biosynthesis; L-arginine biosynthesis; L-ornithine and N-acetyl-L-glutamate from L-glutamate and N(2)-acetyl-L-ornithine (cyclic): step 1/1. Its pathway is amino-acid biosynthesis; L-arginine biosynthesis; N(2)-acetyl-L-ornithine from L-glutamate: step 1/4. In terms of biological role, catalyzes two activities which are involved in the cyclic version of arginine biosynthesis: the synthesis of N-acetylglutamate from glutamate and acetyl-CoA as the acetyl donor, and of ornithine by transacetylation between N(2)-acetylornithine and glutamate. This Streptomyces coelicolor (strain ATCC BAA-471 / A3(2) / M145) protein is Arginine biosynthesis bifunctional protein ArgJ.